Consider the following 240-residue polypeptide: Probable transcriptional regulatory protein MADE_1004275 (240 aa).

Belongs to the TACO1 family.

The protein resides in the cytoplasm. This Alteromonas mediterranea (strain DSM 17117 / CIP 110805 / LMG 28347 / Deep ecotype) protein is Probable transcriptional regulatory protein MADE_1004275.